A 187-amino-acid polypeptide reads, in one-letter code: UPF0301 protein Spro_4027 (187 aa).

This sequence belongs to the UPF0301 (AlgH) family.

This chain is UPF0301 protein Spro_4027, found in Serratia proteamaculans (strain 568).